Here is a 166-residue protein sequence, read N- to C-terminus: SPbeta prophage-derived uncharacterized protein YomO (166 aa).

The chain is SPbeta prophage-derived uncharacterized protein YomO (yomO) from Bacillus subtilis (strain 168).